We begin with the raw amino-acid sequence, 201 residues long: ATP-dependent Clp protease proteolytic subunit (201 aa).

The Nucleophile role is filled by Ser-98. Residue His-123 is part of the active site.

It belongs to the peptidase S14 family. In terms of assembly, fourteen ClpP subunits assemble into 2 heptameric rings which stack back to back to give a disk-like structure with a central cavity, resembling the structure of eukaryotic proteasomes.

The protein resides in the cytoplasm. The enzyme catalyses Hydrolysis of proteins to small peptides in the presence of ATP and magnesium. alpha-casein is the usual test substrate. In the absence of ATP, only oligopeptides shorter than five residues are hydrolyzed (such as succinyl-Leu-Tyr-|-NHMec, and Leu-Tyr-Leu-|-Tyr-Trp, in which cleavage of the -Tyr-|-Leu- and -Tyr-|-Trp bonds also occurs).. Its function is as follows. Cleaves peptides in various proteins in a process that requires ATP hydrolysis. Has a chymotrypsin-like activity. Plays a major role in the degradation of misfolded proteins. This Rickettsia conorii (strain ATCC VR-613 / Malish 7) protein is ATP-dependent Clp protease proteolytic subunit.